The following is a 452-amino-acid chain: Pup--protein ligase (452 aa).

Residue Glu9 participates in Mg(2+) binding. Residue Arg53 participates in ATP binding. Tyr55 provides a ligand contact to Mg(2+). The active-site Proton acceptor is Asp57. Position 63 (Glu63) interacts with Mg(2+). Residues Thr66 and Trp419 each contribute to the ATP site.

This sequence belongs to the Pup ligase/Pup deamidase family. Pup-conjugating enzyme subfamily. Pupylated at an undetermined lysine residue by the prokaryotic ubiquitin-like protein Pup, which leads to its degradation by the proteasome and thereby constitutes a negative auto-regulation.

It catalyses the reaction ATP + [prokaryotic ubiquitin-like protein]-L-glutamate + [protein]-L-lysine = ADP + phosphate + N(6)-([prokaryotic ubiquitin-like protein]-gamma-L-glutamyl)-[protein]-L-lysine.. Its pathway is protein degradation; proteasomal Pup-dependent pathway. It functions in the pathway protein modification; protein pupylation. In terms of biological role, catalyzes the covalent attachment of the prokaryotic ubiquitin-like protein modifier Pup to the proteasomal substrate proteins, thereby targeting them for proteasomal degradation. This tagging system is termed pupylation. The ligation reaction likely involves the side-chain carboxylate of the C-terminal glutamate of Pup and the side-chain amino group of a substrate lysine. This chain is Pup--protein ligase (pafA), found in Mycolicibacterium smegmatis (strain ATCC 700084 / mc(2)155) (Mycobacterium smegmatis).